We begin with the raw amino-acid sequence, 172 residues long: Large ribosomal subunit protein uL10 (172 aa).

This sequence belongs to the universal ribosomal protein uL10 family. As to quaternary structure, part of the ribosomal stalk of the 50S ribosomal subunit. The N-terminus interacts with L11 and the large rRNA to form the base of the stalk. The C-terminus forms an elongated spine to which L12 dimers bind in a sequential fashion forming a multimeric L10(L12)X complex.

Forms part of the ribosomal stalk, playing a central role in the interaction of the ribosome with GTP-bound translation factors. This is Large ribosomal subunit protein uL10 from Brucella anthropi (strain ATCC 49188 / DSM 6882 / CCUG 24695 / JCM 21032 / LMG 3331 / NBRC 15819 / NCTC 12168 / Alc 37) (Ochrobactrum anthropi).